Consider the following 104-residue polypeptide: MISTEKSSDAVAMHCPSGDQHNSEKGLACDVTSVCDTVRLLMSYIRMLSPCVIARNCPSGDIFAQVAFNPFCVPTGVTNWNMLAYNGHLQMNEPTLKLSNIYRQ.

Residues 1–24 (MISTEKSSDAVAMHCPSGDQHNSE) form a disordered region.

This is an uncharacterized protein from Saccharomyces cerevisiae (strain ATCC 204508 / S288c) (Baker's yeast).